Here is a 673-residue protein sequence, read N- to C-terminus: Cyclic nucleotide-binding domain-containing protein 2 (673 aa).

A compositionally biased stretch (polar residues) spans 1-15 (MNRSANPEAASSTSH). The tract at residues 1–89 (MNRSANPEAA…PQPKDRPGVQ (89 aa)) is disordered. Residues 43-86 (PADKSDTTESKSESGSDSRSEEDKESPASIKEIKAETPQPKDRP) show a composition bias toward basic and acidic residues. Position 206-329 (206-329 (CYRSYTESLQ…ETQYRYNFFR (124 aa))) interacts with a nucleoside 3',5'-cyclic phosphate.

As to expression, testis-specific. Exclusively expressed in testicular germ cells while it is not present in mature sperm (at protein level).

It is found in the cytoplasm. It localises to the cytosol. Functionally, essential for male fertility. Plays an important role in spermatogenesis and regulates sperm motility by controlling the development of the flagellar bending of sperm. This is Cyclic nucleotide-binding domain-containing protein 2 (Cnbd2) from Mus musculus (Mouse).